A 107-amino-acid polypeptide reads, in one-letter code: MGVVLPTLIVYAFLLFFSSSSAASLQRPSGGLGQGKKEIARSGLPGQIVDQKRLGGPGSVPPMCRLKCGKCEPCKAVHVPIQPGLIMPLEYYPEAWRCKCGNKLFMP.

The first 22 residues, M1–A22, serve as a signal peptide directing secretion. 3 disulfide bridges follow: C64–C98, C68–C74, and C71–C100.

It belongs to the plant cysteine rich small secretory peptide family. Epidermal patterning factor subfamily. In terms of assembly, interacts with ERECTA. In terms of tissue distribution, expressed asymetically in the hypocotyl, on the side proximal to the folded cotyledons at germination. Detected in developing flowers, the chalazal region of ovules and near the root apex, but not in inflorescence stems. Expressed in cotyledons, flowers, adult leaves and fruits.

The protein resides in the secreted. In terms of biological role, controls stomatal patterning. Mediates differentiation of stomatal lineage cells to pavement cells and stomatal development inhibition. TMM (AC Q9SSD1) functions to dampen or block CLL1 signaling. Acts as a growth-regulatory ligand for ERECTA family receptors. Promotes fruit growth and fertility. The polypeptide is EPIDERMAL PATTERNING FACTOR-like protein 5 (Arabidopsis thaliana (Mouse-ear cress)).